The chain runs to 112 residues: Signal peptidase complex-like protein DTM1 (112 aa).

Residues 1–25 form the signal peptide; the sequence is MGRDEMLRRSLVALAAAVVVTGVVT. The next 2 helical transmembrane spans lie at 33–53 and 92–112; these read ATYG…WEFF and MAML…YVSS.

This sequence belongs to the SPCS1 family.

It localises to the endoplasmic reticulum membrane. Functionally, functions in tapetum development during early meiosis. May play a role in the endoplasmic reticulum (ER) membrane in the early stages of tapetum development in anthers. Seems to function after MSP1 and before UDT1. The polypeptide is Signal peptidase complex-like protein DTM1 (Oryza sativa subsp. japonica (Rice)).